Consider the following 62-residue polypeptide: Small ribosomal subunit protein eS27 (62 aa).

Zn(2+) is bound by residues C17, C20, C36, and C39. The C4-type zinc-finger motif lies at C17 to C39.

This sequence belongs to the eukaryotic ribosomal protein eS27 family. In terms of assembly, part of the 30S ribosomal subunit. Zn(2+) is required as a cofactor.

The polypeptide is Small ribosomal subunit protein eS27 (Methanocaldococcus jannaschii (strain ATCC 43067 / DSM 2661 / JAL-1 / JCM 10045 / NBRC 100440) (Methanococcus jannaschii)).